Reading from the N-terminus, the 302-residue chain is Bifunctional protein FolD (302 aa).

NADP(+) contacts are provided by residues 168–170 (GRS), Thr-197, and Val-238.

The protein belongs to the tetrahydrofolate dehydrogenase/cyclohydrolase family. Homodimer.

The catalysed reaction is (6R)-5,10-methylene-5,6,7,8-tetrahydrofolate + NADP(+) = (6R)-5,10-methenyltetrahydrofolate + NADPH. It carries out the reaction (6R)-5,10-methenyltetrahydrofolate + H2O = (6R)-10-formyltetrahydrofolate + H(+). The protein operates within one-carbon metabolism; tetrahydrofolate interconversion. Its function is as follows. Catalyzes the oxidation of 5,10-methylenetetrahydrofolate to 5,10-methenyltetrahydrofolate and then the hydrolysis of 5,10-methenyltetrahydrofolate to 10-formyltetrahydrofolate. This Desulfatibacillum aliphaticivorans protein is Bifunctional protein FolD.